Reading from the N-terminus, the 288-residue chain is MASLKEIDTRIKSTKKMKQITKAMNMVSSSKLRRAEKNTKQFTPYMDKMQDAITAVAGASSNTNHPMLRPRKITRSGYLVITSDKGLAGAYSANVLKKLITDIEAKHQDSSEYGIVVLGQQGVDFLKNRGYDIEYSQVDVPDQPSFKSVQALANHAIDLYSEEEIDELNIYYSHYVSVLENKPTSRQVLPLSQEDSSKGHGHLSSYEFEPDKESILSVILPQYVESLIYGTILDAKASEHATRMTAMKNATDNATELIDDLSLEYNRARQAEITQQITEIVGGSAALE.

This sequence belongs to the ATPase gamma chain family. As to quaternary structure, F-type ATPases have 2 components, CF(1) - the catalytic core - and CF(0) - the membrane proton channel. CF(1) has five subunits: alpha(3), beta(3), gamma(1), delta(1), epsilon(1). CF(0) has three main subunits: a, b and c.

Its subcellular location is the cell membrane. In terms of biological role, produces ATP from ADP in the presence of a proton gradient across the membrane. The gamma chain is believed to be important in regulating ATPase activity and the flow of protons through the CF(0) complex. In Staphylococcus aureus (strain bovine RF122 / ET3-1), this protein is ATP synthase gamma chain.